The following is a 347-amino-acid chain: Rhodopsin (347 aa).

Residues 1–33 are Extracellular-facing; the sequence is TEGPDFYIPMVNTTGVVRSPYEYPQYYLVNPAA. Asparagine 12 carries N-linked (GlcNAc...) asparagine glycosylation. Residues 34-58 form a helical membrane-spanning segment; sequence YAVLGAYMFFLIIVGFPINFLTLYV. Residues 59 to 70 are Cytoplasmic-facing; the sequence is TLEHKKLRTPLN. Residues 71-93 form a helical membrane-spanning segment; that stretch reads YILLNLAVADLFMVIGGFTTTMY. The Extracellular segment spans residues 94–107; it reads SSMHGYFVLGRLGC. Residues cysteine 107 and cysteine 184 are joined by a disulfide bond. The chain crosses the membrane as a helical span at residues 108–130; it reads NIEGFFATLGGMISLWSLAVLAI. Residues 131–133 carry the 'Ionic lock' involved in activated form stabilization motif; that stretch reads ERW. At 131–149 the chain is on the cytoplasmic side; sequence ERWVVVCKPISNFRFGENH. The chain crosses the membrane as a helical span at residues 150–170; it reads AIMGVSLTWVMALACTVPPLV. The Extracellular portion of the chain corresponds to 171 to 199; sequence GWSRYIPEGMQCACGIDYYTRAEGYNNES. N-linked (GlcNAc...) asparagine glycosylation occurs at asparagine 197. The helical transmembrane segment at 200 to 221 threads the bilayer; sequence FVIYMFTFHFLFPMFIIFFCYG. Topologically, residues 222-249 are cytoplasmic; that stretch reads RLLCAVKEAAAAQQESETTQRAEREVTR. A helical transmembrane segment spans residues 250–271; sequence MVILMVIGYLVCWLPYASVAWF. The Extracellular segment spans residues 272–283; that stretch reads IFTHKGSEFGPL. Residues 284–305 form a helical membrane-spanning segment; it reads FMAVPSFFAKSSSIYNPIIYIC. N6-(retinylidene)lysine is present on lysine 293. Residues 306–347 lie on the Cytoplasmic side of the membrane; sequence MNKQFRQCMITTLFCGKNPFEGQEEDSSTKTEASSASSVSPA. The S-palmitoyl cysteine moiety is linked to residue cysteine 320. A disordered region spans residues 326-347; sequence EGQEEDSSTKTEASSASSVSPA. Positions 335–347 are enriched in low complexity; that stretch reads KTEASSASSVSPA.

Belongs to the G-protein coupled receptor 1 family. Opsin subfamily. Post-translationally, phosphorylated on some or all of the serine and threonine residues present in the C-terminal region. In terms of processing, contains one covalently linked retinal chromophore.

The protein resides in the membrane. It localises to the cell projection. It is found in the cilium. The protein localises to the photoreceptor outer segment. In terms of biological role, photoreceptor required for image-forming vision at low light intensity. While most salt water fish species use retinal as chromophore, most freshwater fish use 3-dehydroretinal, or a mixture of retinal and 3-dehydroretinal. Light-induced isomerization of 11-cis to all-trans retinal triggers a conformational change that activates signaling via G-proteins. Subsequent receptor phosphorylation mediates displacement of the bound G-protein alpha subunit by arrestin and terminates signaling. This Sargocentron spiniferum (Sabre squirrelfish) protein is Rhodopsin (rho).